Here is a 972-residue protein sequence, read N- to C-terminus: C-1-tetrahydrofolate synthase, mitochondrial (972 aa).

Residues 1–55 (MNVMVSFNQLRNYFLESNSLRPSKWLFQSYGTSSSANILNGKLLARKLQRSVAEE) constitute a mitochondrion transit peptide. A methylenetetrahydrofolate dehydrogenase and cyclohydrolase region spans residues 56–340 (VQALKAKDRN…DLNPLELKKP (285 aa)). Residues 84–88 (YVRMK) and 131–133 (VQL) contribute to the substrate site. NADP(+)-binding positions include 202-204 (GRS) and Ser227. Position 299-303 (299-303 (PGGVG)) interacts with substrate. Residues 341 to 972 (VPSDIEIANS…CENGEIVGLS (632 aa)) form a formyltetrahydrofolate synthetase region. 405–412 (TPFGEGKS) serves as a coordination point for ATP.

In the N-terminal section; belongs to the tetrahydrofolate dehydrogenase/cyclohydrolase family. This sequence in the C-terminal section; belongs to the formate--tetrahydrofolate ligase family. As to quaternary structure, homodimer.

It localises to the mitochondrion. The catalysed reaction is (6R)-5,10-methylene-5,6,7,8-tetrahydrofolate + NADP(+) = (6R)-5,10-methenyltetrahydrofolate + NADPH. It carries out the reaction (6R)-5,10-methenyltetrahydrofolate + H2O = (6R)-10-formyltetrahydrofolate + H(+). It catalyses the reaction (6S)-5,6,7,8-tetrahydrofolate + formate + ATP = (6R)-10-formyltetrahydrofolate + ADP + phosphate. Its pathway is one-carbon metabolism; tetrahydrofolate interconversion. In terms of biological role, mitochondrial isozyme of C-1-tetrahydrofolate synthase. The trifunctional enzyme catalyzes the interconversion of the one-carbon derivatives of tetrahydrofolate (THF) between different oxidation states by the enzymatic activities 10-formyltetrahydrofolate synthetase, 5,lO-methenyltetrahydrofolate cyclohydrolase, and 5,lO-methylenetetrahydrofolate dehydrogenase. The protein is C-1-tetrahydrofolate synthase, mitochondrial (ade9) of Schizosaccharomyces pombe (strain 972 / ATCC 24843) (Fission yeast).